The primary structure comprises 100 residues: Small ribosomal subunit protein bS18c (100 aa).

Residues 81 to 100 (KQFERTESTPRTTGPRTRKK) form a disordered region. Residues 89–100 (TPRTTGPRTRKK) show a composition bias toward low complexity.

The protein belongs to the bacterial ribosomal protein bS18 family. As to quaternary structure, part of the 30S ribosomal subunit.

The protein localises to the plastid. Its subcellular location is the chloroplast. The chain is Small ribosomal subunit protein bS18c from Nandina domestica (Heavenly bamboo).